Here is a 216-residue protein sequence, read N- to C-terminus: MDGPERDFNLKVVLISFKKCLTDKGEVLLDHYTASWKGLVRFLNSLGAVFSFISKDVVSKLQIMEHLRSGPQSEHYISLQSMVAYEVSNKLVDRDSRSRPRHPNSGCRTVLRLHRALHWLQLFLEGLRTSSEDARTSTLCSEAYNATLAAYHSWIVRQAVNVAFHALPPRKVFLEAMNMGSSEQAVEMLGEALPFIEQVYDISQKLYAEHSLLDLP.

Asp-56, Lys-60, Arg-108, Arg-112, and His-152 together coordinate an N-acylsphingoid base 1-phosphate.

This sequence belongs to the GLTP family.

It localises to the cytoplasm. The protein resides in the cytosol. The protein localises to the golgi apparatus. It is found in the trans-Golgi network membrane. Its subcellular location is the cell membrane. It localises to the endosome membrane. The protein resides in the nucleus outer membrane. The catalysed reaction is N-(hexadecanoyl)-sphing-4-enine-1-phosphate(in) = N-(hexadecanoyl)-sphing-4-enine-1-phosphate(out). It carries out the reaction N-(9Z-octadecenoyl)-sphing-4-enine-1-phosphate(in) = N-(9Z-octadecenoyl)-sphing-4-enine-1-phosphate(out). Its function is as follows. Mediates the intracellular transfer of ceramide-1-phosphate (C1P) between organelle membranes and the cell membrane. Required for normal structure of the Golgi stacks. Can bind phosphoceramides with a variety of aliphatic chains, but has a preference for lipids with saturated C16:0 or monounsaturated C18:1 aliphatic chains, and is inefficient with phosphoceramides containing lignoceryl (C24:0). Plays a role in the regulation of the cellular levels of ceramide-1-phosphate, and thereby contributes to the regulation of phospholipase PLA2G4A activity and the release of arachidonic acid. Has no activity with galactosylceramide, lactosylceramide, sphingomyelin, phosphatidylcholine, phosphatidic acid and ceramide. C1P transfer is stimulated by phosphatidylserine in C1P source vesicles. Regulates autophagy, inflammasome mediated IL1B and IL18 processing, and pyroptosis, but not apoptosis. The sequence is that of Ceramide-1-phosphate transfer protein (Cptp) from Rattus norvegicus (Rat).